The following is a 234-amino-acid chain: Lactate utilization protein C 1 (234 aa).

The protein belongs to the LutC/YkgG family.

Its function is as follows. Is involved in L-lactate degradation and allows cells to grow with lactate as the sole carbon source. This Bacillus mycoides (strain KBAB4) (Bacillus weihenstephanensis) protein is Lactate utilization protein C 1.